Reading from the N-terminus, the 656-residue chain is Threonine--tRNA ligase (656 aa).

The TGS domain occupies 1–63 (MAEIQLTFPD…LEDGAIEIIT (63 aa)). The tract at residues 243-541 (DHRVIGNQLD…LTEIYKGAFP (299 aa)) is catalytic. Zn(2+) contacts are provided by C337, H388, and H518.

This sequence belongs to the class-II aminoacyl-tRNA synthetase family. Homodimer. The cofactor is Zn(2+).

The protein resides in the cytoplasm. It catalyses the reaction tRNA(Thr) + L-threonine + ATP = L-threonyl-tRNA(Thr) + AMP + diphosphate + H(+). In terms of biological role, catalyzes the attachment of threonine to tRNA(Thr) in a two-step reaction: L-threonine is first activated by ATP to form Thr-AMP and then transferred to the acceptor end of tRNA(Thr). Also edits incorrectly charged L-seryl-tRNA(Thr). This is Threonine--tRNA ligase from Latilactobacillus sakei subsp. sakei (strain 23K) (Lactobacillus sakei subsp. sakei).